The sequence spans 525 residues: CTP synthase (525 aa).

Residues 1 to 269 are amidoligase domain; that stretch reads MKYIIVTGGV…ADAITTHLHL (269 aa). Position 12 (S12) interacts with CTP. S12 is a binding site for UTP. ATP is bound by residues 13–18 and D70; that span reads GLGKGI. Residues D70 and E144 each contribute to the Mg(2+) site. CTP-binding positions include 151–153, 190–195, and K226; these read DIE and KTKPTQ. UTP contacts are provided by residues 190-195 and K226; that span reads KTKPTQ. The Glutamine amidotransferase type-1 domain maps to 292 to 524; that stretch reads VAIVSKYGIE…VSACRKNKKT (233 aa). G348 contacts L-glutamine. C375 functions as the Nucleophile; for glutamine hydrolysis in the catalytic mechanism. L-glutamine is bound by residues 376–379, E399, and R454; that span reads LGFQ. Residues H497 and E499 contribute to the active site.

It belongs to the CTP synthase family. Homotetramer.

The enzyme catalyses UTP + L-glutamine + ATP + H2O = CTP + L-glutamate + ADP + phosphate + 2 H(+). It carries out the reaction L-glutamine + H2O = L-glutamate + NH4(+). The catalysed reaction is UTP + NH4(+) + ATP = CTP + ADP + phosphate + 2 H(+). It participates in pyrimidine metabolism; CTP biosynthesis via de novo pathway; CTP from UDP: step 2/2. With respect to regulation, allosterically activated by GTP, when glutamine is the substrate; GTP has no effect on the reaction when ammonia is the substrate. The allosteric effector GTP functions by stabilizing the protein conformation that binds the tetrahedral intermediate(s) formed during glutamine hydrolysis. Inhibited by the product CTP, via allosteric rather than competitive inhibition. Its function is as follows. Catalyzes the ATP-dependent amination of UTP to CTP with either L-glutamine or ammonia as the source of nitrogen. Regulates intracellular CTP levels through interactions with the four ribonucleotide triphosphates. In Methanosphaerula palustris (strain ATCC BAA-1556 / DSM 19958 / E1-9c), this protein is CTP synthase.